Consider the following 1026-residue polypeptide: Multidrug resistance protein MdtC (1026 aa).

Helical transmembrane passes span isoleucine 15 to alanine 35, glutamate 333 to leucine 353, leucine 360 to cysteine 380, leucine 387 to leucine 407, valine 431 to leucine 451, phenylalanine 463 to proline 483, leucine 528 to proline 548, leucine 853 to serine 873, leucine 897 to valine 917, proline 953 to glycine 973, and isoleucine 984 to valine 1004.

Belongs to the resistance-nodulation-cell division (RND) (TC 2.A.6) family. MdtC subfamily. As to quaternary structure, part of a tripartite efflux system composed of MdtA, MdtB and MdtC. MdtC forms a heteromultimer with MdtB.

The protein localises to the cell inner membrane. The sequence is that of Multidrug resistance protein MdtC from Salmonella choleraesuis (strain SC-B67).